Here is a 362-residue protein sequence, read N- to C-terminus: Adenosine deaminase (362 aa).

Zn(2+)-binding residues include His-19 and His-21. Residues His-21, Asp-23, and Gly-181 each coordinate substrate. His-208 lines the Zn(2+) pocket. Glu-211 acts as the Proton donor in catalysis. Position 300 (Asp-300) interacts with Zn(2+).

Belongs to the metallo-dependent hydrolases superfamily. Adenosine and AMP deaminases family. Adenosine deaminase subfamily. It depends on Zn(2+) as a cofactor.

The enzyme catalyses adenosine + H2O + H(+) = inosine + NH4(+). The catalysed reaction is 2'-deoxyadenosine + H2O + H(+) = 2'-deoxyinosine + NH4(+). Catalyzes the hydrolytic deamination of adenosine and 2-deoxyadenosine. In Mycobacterium leprae (strain TN), this protein is Adenosine deaminase.